Reading from the N-terminus, the 626-residue chain is DNA-directed RNA polymerase subunit gamma (626 aa).

Positions 71, 73, 86, and 89 each coordinate Zn(2+). Mg(2+)-binding residues include D467, D469, and D471.

The protein belongs to the RNA polymerase beta' chain family. RpoC1 subfamily. In terms of assembly, in cyanobacteria the RNAP catalytic core is composed of 2 alpha, 1 beta, 1 beta', 1 gamma and 1 omega subunit. When a sigma factor is associated with the core the holoenzyme is formed, which can initiate transcription. Mg(2+) serves as cofactor. Zn(2+) is required as a cofactor.

The catalysed reaction is RNA(n) + a ribonucleoside 5'-triphosphate = RNA(n+1) + diphosphate. In terms of biological role, DNA-dependent RNA polymerase catalyzes the transcription of DNA into RNA using the four ribonucleoside triphosphates as substrates. This Microcystis aeruginosa (strain NIES-843 / IAM M-2473) protein is DNA-directed RNA polymerase subunit gamma.